A 93-amino-acid polypeptide reads, in one-letter code: Protein FMP16, mitochondrial (93 aa).

Residues 1-25 (MLRTTFLRTPRQLMRKSPRASFSIV) constitute a mitochondrion transit peptide. Residues 30 to 93 (FPHLKNNQDE…EQNRPDDGVY (64 aa)) form a disordered region. Basic and acidic residues predominate over residues 35–93 (NNQDEAEKKEQGLFDSNKKRLDTLEHGKNPDYKQPGMEDLKKKGDDARIEQNRPDDGVY).

Its subcellular location is the mitochondrion. This Saccharomyces cerevisiae (strain ATCC 204508 / S288c) (Baker's yeast) protein is Protein FMP16, mitochondrial (FMP16).